The following is a 551-amino-acid chain: Alkaline nuclease (551 aa).

This sequence belongs to the herpesviridae alkaline nuclease family. Interacts with major DNA-binding protein; this interaction increases the nuclease processivity of the alkaline exonuclease.

The protein localises to the host nucleus. Its subcellular location is the host cytoplasm. Plays a role in processing non linear or branched viral DNA intermediates in order to promote the production of mature packaged unit-length linear progeny viral DNA molecules. Exhibits endonuclease and exonuclease activities and accepts both double-stranded and single-stranded DNA as substrate. Exonuclease digestion of DNA is in the 5'-&gt; 3' direction and the products are 5'-monophosphate nucleosides. Additionally, forms a recombinase with the major DNA-binding protein, which displays strand exchange activity. The sequence is that of Alkaline nuclease from Homo sapiens (Human).